Consider the following 222-residue polypeptide: NADH dehydrogenase [ubiquinone] iron-sulfur protein 8-A, mitochondrial (222 aa).

4Fe-4S ferredoxin-type domains follow at residues 114–143 and 153–182; these read RRYPTGEERCIACKLCEAVCPAQAITIEAE and TRYDIDMTKCIYCGFCQEACPVDAIVEGPN. Residues cysteine 123, cysteine 126, cysteine 129, cysteine 133, cysteine 162, cysteine 165, cysteine 168, and cysteine 172 each coordinate [4Fe-4S] cluster.

Belongs to the complex I 23 kDa subunit family. Complex I is composed of at least 49 different subunits. This is a component of the iron-sulfur (IP) fragment of the enzyme. The cofactor is [4Fe-4S] cluster.

The protein resides in the mitochondrion. It carries out the reaction a ubiquinone + NADH + 5 H(+)(in) = a ubiquinol + NAD(+) + 4 H(+)(out). In terms of biological role, core subunit of the mitochondrial membrane respiratory chain NADH dehydrogenase (Complex I) that is believed to belong to the minimal assembly required for catalysis. Complex I functions in the transfer of electrons from NADH to the respiratory chain. The immediate electron acceptor for the enzyme is believed to be ubiquinone. May donate electrons to ubiquinone. This is NADH dehydrogenase [ubiquinone] iron-sulfur protein 8-A, mitochondrial from Arabidopsis thaliana (Mouse-ear cress).